A 1488-amino-acid chain; its full sequence is Chromosome partition protein MukB (1488 aa).

34-41 (GGNGAGKS) serves as a coordination point for ATP. Coiled coils occupy residues 326-418 (LEAD…QYNQ), 444-472 (LDTF…QTAH), and 509-602 (RHLA…QRAP). The tract at residues 666-783 (PGGAEDQRLN…SLPIFGRAAR (118 aa)) is flexible hinge. Coiled coils occupy residues 835–923 (EAEI…AKLE), 977–1116 (EMLS…AKAG), and 1209–1265 (VEAI…LQSV). Residues 1049–1074 (ADSGAEERARQRRDELHAQLSNNRSR) are disordered. Positions 1051–1065 (SGAEERARQRRDELH) are enriched in basic and acidic residues.

The protein belongs to the SMC family. MukB subfamily. Homodimerization via its hinge domain. Binds to DNA via its C-terminal region. Interacts, and probably forms a ternary complex, with MukE and MukF via its C-terminal region. The complex formation is stimulated by calcium or magnesium. Interacts with tubulin-related protein FtsZ.

The protein localises to the cytoplasm. Its subcellular location is the nucleoid. Its function is as follows. Plays a central role in chromosome condensation, segregation and cell cycle progression. Functions as a homodimer, which is essential for chromosome partition. Involved in negative DNA supercoiling in vivo, and by this means organize and compact chromosomes. May achieve or facilitate chromosome segregation by condensation DNA from both sides of a centrally located replisome during cell division. The polypeptide is Chromosome partition protein MukB (Salmonella typhi).